A 304-amino-acid chain; its full sequence is Acetyl-coenzyme A carboxylase carboxyl transferase subunit beta (304 aa).

The CoA carboxyltransferase N-terminal domain maps to 23-292; it reads VWTKCDSCGQ…PNPDAPREGV (270 aa). Residues Cys-27, Cys-30, Cys-46, and Cys-49 each contribute to the Zn(2+) site. Residues 27-49 form a C4-type zinc finger; sequence CDSCGQVLYRAELERNLEVCPKC. The interval 284-304 is disordered; it reads NPDAPREGVVVPPAPDQESEV.

Belongs to the AccD/PCCB family. In terms of assembly, acetyl-CoA carboxylase is a heterohexamer composed of biotin carboxyl carrier protein (AccB), biotin carboxylase (AccC) and two subunits each of ACCase subunit alpha (AccA) and ACCase subunit beta (AccD). Zn(2+) serves as cofactor.

It localises to the cytoplasm. The enzyme catalyses N(6)-carboxybiotinyl-L-lysyl-[protein] + acetyl-CoA = N(6)-biotinyl-L-lysyl-[protein] + malonyl-CoA. It functions in the pathway lipid metabolism; malonyl-CoA biosynthesis; malonyl-CoA from acetyl-CoA: step 1/1. Component of the acetyl coenzyme A carboxylase (ACC) complex. Biotin carboxylase (BC) catalyzes the carboxylation of biotin on its carrier protein (BCCP) and then the CO(2) group is transferred by the transcarboxylase to acetyl-CoA to form malonyl-CoA. This is Acetyl-coenzyme A carboxylase carboxyl transferase subunit beta from Salmonella paratyphi A (strain ATCC 9150 / SARB42).